The chain runs to 422 residues: Mitochondrial inner membrane magnesium transporter mrs2 (422 aa).

Residues 1 to 49 constitute a mitochondrion transit peptide; that stretch reads MVLIVGFNLRTSIASFSPICRSLFLFPKYRSRIIRPVVLLEKPFDKHFY. The chain crosses the membrane as a helical span at residues 331 to 351; it reads LMLLGLKLSAMTLGLGFGAVV. The short motif at 355–358 is the YGMN element; sequence YGMN. A helical transmembrane segment spans residues 370–390; that stretch reads FYITTGSIFAFAAFLSSLGIL.

Belongs to the CorA metal ion transporter (MIT) (TC 1.A.35) family. Homopentamer. Forms homooligomers. Interacts with MFM1.

Its subcellular location is the mitochondrion inner membrane. Functionally, high-conductance magnesium-selective channel that mediates the influx of magnesium into the mitochondrial matrix. Essential for the splicing of mRNA group II introns in mitochondria by affecting mitochondrial magnesium concentrations, which are critical for group II intron splicing. It also suppresses a variety of mitochondrial intron mutations and its absence may disturb the assembly of mitochondrial membrane complexes. This Schizosaccharomyces pombe (strain 972 / ATCC 24843) (Fission yeast) protein is Mitochondrial inner membrane magnesium transporter mrs2 (mrs2).